An 83-amino-acid polypeptide reads, in one-letter code: Small ribosomal subunit protein uS17 (83 aa).

The protein belongs to the universal ribosomal protein uS17 family. In terms of assembly, part of the 30S ribosomal subunit.

Its function is as follows. One of the primary rRNA binding proteins, it binds specifically to the 5'-end of 16S ribosomal RNA. The sequence is that of Small ribosomal subunit protein uS17 from Buchnera aphidicola subsp. Acyrthosiphon pisum (strain 5A).